Consider the following 131-residue polypeptide: Profilin-4 (131 aa).

Residues Cys-13 and Cys-115 are joined by a disulfide bond. Residues 81-97 (VVIRGKKGTGGITIKKT) carry the Involved in PIP2 interaction motif. At Thr-111 the chain carries Phosphothreonine.

The protein belongs to the profilin family. Occurs in many kinds of cells as a complex with monomeric actin in a 1:1 ratio. In terms of processing, phosphorylated by MAP kinases. In terms of tissue distribution, expressed predominantly in endosperm but is also found at low levels in all tissues examined, including mature and germinated pollen.

Its subcellular location is the cytoplasm. It localises to the cytoskeleton. In terms of biological role, binds to actin and affects the structure of the cytoskeleton. At high concentrations, profilin prevents the polymerization of actin, whereas it enhances it at low concentrations. By binding to PIP2, it inhibits the formation of IP3 and DG. Has a high affinity for poly-proline. This Zea mays (Maize) protein is Profilin-4 (PRO4).